Here is a 256-residue protein sequence, read N- to C-terminus: Cytoplasmic envelopment protein 1 (256 aa).

Belongs to the herpesviridae cytoplasmic envelopment protein 1 family.

The protein localises to the virion. The protein resides in the virion tegument. It localises to the host cytoplasm. It is found in the host Golgi apparatus. Its function is as follows. Plays a critical role in cytoplasmic virus egress. Participates in the final step of tegumentation and envelope acquisition within the host cytoplasm. The chain is Cytoplasmic envelopment protein 1 (U75) from Homo sapiens (Human).